A 315-amino-acid chain; its full sequence is Aspartate carbamoyltransferase catalytic subunit (315 aa).

Carbamoyl phosphate is bound by residues R65 and T66. Position 93 (K93) interacts with L-aspartate. The carbamoyl phosphate site is built by R115, H145, and Q148. L-aspartate contacts are provided by R179 and R234. Residues G275 and P276 each coordinate carbamoyl phosphate.

This sequence belongs to the aspartate/ornithine carbamoyltransferase superfamily. ATCase family. In terms of assembly, heterododecamer (2C3:3R2) of six catalytic PyrB chains organized as two trimers (C3), and six regulatory PyrI chains organized as three dimers (R2).

It catalyses the reaction carbamoyl phosphate + L-aspartate = N-carbamoyl-L-aspartate + phosphate + H(+). It participates in pyrimidine metabolism; UMP biosynthesis via de novo pathway; (S)-dihydroorotate from bicarbonate: step 2/3. Catalyzes the condensation of carbamoyl phosphate and aspartate to form carbamoyl aspartate and inorganic phosphate, the committed step in the de novo pyrimidine nucleotide biosynthesis pathway. This Xanthomonas oryzae pv. oryzae (strain MAFF 311018) protein is Aspartate carbamoyltransferase catalytic subunit.